A 360-amino-acid chain; its full sequence is Protein Wnt-2 (360 aa).

A signal peptide spans 1 to 25; the sequence is MNSPLRGIWLWLPLLLTWLTPEVSS. Cystine bridges form between C76-C87, C127-C135, C137-C157, C206-C220, C208-C215, C278-C309, C294-C304, C308-C348, C324-C339, C326-C336, and C331-C332. S212 carries the O-palmitoleoyl serine; by PORCN lipid modification. N295 carries N-linked (GlcNAc...) asparagine glycosylation.

The protein belongs to the Wnt family. Palmitoleoylation is required for efficient binding to frizzled receptors. Depalmitoleoylation leads to Wnt signaling pathway inhibition.

It is found in the secreted. The protein resides in the extracellular space. It localises to the extracellular matrix. Its function is as follows. Ligand for members of the frizzled family of seven transmembrane receptors. Functions in the canonical Wnt signaling pathway that results in activation of transcription factors of the TCF/LEF family. Functions as a upstream regulator of FGF10 expression. Plays an important role in embryonic lung development. May contribute to embryonic brain development by regulating the proliferation of dopaminergic precursors and neurons. The polypeptide is Protein Wnt-2 (WNT2) (Callithrix jacchus (White-tufted-ear marmoset)).